Here is a 459-residue protein sequence, read N- to C-terminus: Cysteine--tRNA ligase (459 aa).

C28 is a binding site for Zn(2+). The 'HIGH' region motif lies at 30-40 (ITVYDLCHVGH). Zn(2+) is bound by residues C209, H234, and E238. The 'KMSKS' region signature appears at 266-270 (KMSKS). An ATP-binding site is contributed by K269.

Belongs to the class-I aminoacyl-tRNA synthetase family. In terms of assembly, monomer. Zn(2+) serves as cofactor.

It is found in the cytoplasm. The catalysed reaction is tRNA(Cys) + L-cysteine + ATP = L-cysteinyl-tRNA(Cys) + AMP + diphosphate. This Pasteurella multocida (strain Pm70) protein is Cysteine--tRNA ligase (cysS).